We begin with the raw amino-acid sequence, 346 residues long: MALDVKSRAKRYEKLDFLGEGQFATVYKARDKNTNQIVAIKKIKLGHRSEAKDGINRTALREIKLLQELSHPNIIGLLDAFGHKSNISLVFDFMETDLEVIIKDNSLVLTPSHIKAYMLMTLQGLEYLHQHWILHRDLKPNNLLLDENGVLKLADFGLAKSFGSPNRAYTHQVVTRWYRAPELLFGARMYGVGVDMWAVGCILAELLLRVPFLPGDSDLDQLTRIFETLGTPTEEQWPDMCSLPDYVTFKSFPGIPLHHIFSAAGDDLLDLIQGLFLFNPCARITATQALKMKYFSNRPGPTPGCQLPRPNCPVETLKEQSNPALAIKRKRTEALEQGGLPKKLIF.

A2 carries the N-acetylalanine modification. S7 bears the Phosphoserine mark. The 284-residue stretch at 12-295 (YEKLDFLGEG…ATQALKMKYF (284 aa)) folds into the Protein kinase domain. ATP contacts are provided by residues 18 to 26 (LGEGQFATV) and K41. Residue D137 is the Proton acceptor of the active site. S164 is modified (phosphoserine; by CDK1 and CDK2). A Phosphothreonine; by CDK2 modification is found at T170. The residue at position 321 (S321) is a Phosphoserine.

Belongs to the protein kinase superfamily. CMGC Ser/Thr protein kinase family. CDC2/CDKX subfamily. In terms of assembly, associates primarily with cyclin-H (CCNH) and MAT1 to form the CAK complex. CAK can further associate with the core-TFIIH to form the TFIIH basal transcription factor; this complex is sensitive to UV light. The CAK complex binds to p53/TP53 in response to DNA damage. Interacts with CDK2, SF1/NR5A1, PUF60 and PRKCI. Interacts with HINT1. Post-translationally, phosphorylation of Ser-164 during mitosis inactivates the enzyme. Phosphorylation of Thr-170 is required for activity. Phosphorylated at Ser-164 and Thr-170 by CDK2. As to expression, ubiquitous.

The protein resides in the nucleus. It localises to the cytoplasm. It is found in the perinuclear region. The enzyme catalyses L-seryl-[protein] + ATP = O-phospho-L-seryl-[protein] + ADP + H(+). The catalysed reaction is L-threonyl-[protein] + ATP = O-phospho-L-threonyl-[protein] + ADP + H(+). It carries out the reaction [DNA-directed RNA polymerase] + ATP = phospho-[DNA-directed RNA polymerase] + ADP + H(+). With respect to regulation, inactivated by phosphorylation. Repressed by roscovitine (seliciclib, CYC202), R547 (Ro-4584820) and SNS-032 (BMS-387032). The association of p53/TP53 to the CAK complex in response to DNA damage reduces kinase activity toward CDK2 and RNA polymerase II repetitive C-terminal domain (CTD), thus stopping cell cycle progression. The inactivation by roscovitine promotes caspase-mediated apoptosis in leukemic cells. Specifically inactivated by THZ1. Its function is as follows. Serine/threonine kinase involved in cell cycle control and in RNA polymerase II-mediated RNA transcription. Cyclin-dependent kinases (CDKs) are activated by the binding to a cyclin and mediate the progression through the cell cycle. Each different complex controls a specific transition between 2 subsequent phases in the cell cycle. Required for both activation and complex formation of CDK1/cyclin-B during G2-M transition, and for activation of CDK2/cyclins during G1-S transition (but not complex formation). CDK7 is the catalytic subunit of the CDK-activating kinase (CAK) complex. Phosphorylates SPT5/SUPT5H, SF1/NR5A1, POLR2A, p53/TP53, CDK1, CDK2, CDK4, CDK6 and CDK11B/CDK11. Initiates transcription by RNA polymerase II by mediating phosphorylation of POLR2A at 'Ser-5' of the repetitive C-terminal domain (CTD) when POLR2A is in complex with DNA, promoting dissociation from DNA and initiation. CAK activates the cyclin-associated kinases CDK1, CDK2, CDK4 and CDK6 by threonine phosphorylation, thus regulating cell cycle progression. CAK complexed to the core-TFIIH basal transcription factor activates RNA polymerase II by serine phosphorylation of the CTD of POLR2A, allowing its escape from the promoter and elongation of the transcripts. Its expression and activity are constant throughout the cell cycle. Upon DNA damage, triggers p53/TP53 activation by phosphorylation, but is inactivated in turn by p53/TP53; this feedback loop may lead to an arrest of the cell cycle and of the transcription, helping in cell recovery, or to apoptosis. Required for DNA-bound peptides-mediated transcription and cellular growth inhibition. This is Cyclin-dependent kinase 7 (CDK7) from Homo sapiens (Human).